Consider the following 132-residue polypeptide: Agouti-signaling protein (132 aa).

Positions 1–22 are cleaved as a signal peptide; that stretch reads MDVTRLLLATLLVFLCFFTVYS. Asn-39 carries N-linked (GlcNAc...) asparagine glycosylation. The disordered stretch occupies residues 62–88; the sequence is ISRKEAEKKRSSKKEASMKKVAQPRTP. Basic and acidic residues predominate over residues 63–79; sequence SRKEAEKKRSSKKEASM. 5 disulfides stabilise this stretch: Cys-93/Cys-108, Cys-100/Cys-114, Cys-107/Cys-125, Cys-111/Cys-132, and Cys-116/Cys-123. Residues 93 to 132 form the Agouti domain; it reads CVATRYSCKPPAPACCDPCASCQCRFFRSACSCRVLRLNC.

It localises to the secreted. In terms of biological role, involved in the regulation of melanogenesis. The binding of ASP to MC1R precludes alpha-MSH initiated signaling and thus blocks production of cAMP, leading to a down-regulation of eumelanogenesis (brown/black pigment) and thus increasing synthesis of pheomelanin (yellow/red pigment). The sequence is that of Agouti-signaling protein (ASIP) from Semnopithecus entellus (Northern plains gray langur).